A 517-amino-acid chain; its full sequence is Lysophosphatidylcholine acyltransferase 1 (517 aa).

The Cytoplasmic segment spans residues 1-52; the sequence is MRFPNRKLHTAVNGGDSGVSTHFRNPFVHELRFTTLQKLKIAVMTVTLFPVR. Residues 53 to 73 traverse the membrane as a helical; Signal-anchor for type II membrane protein segment; it reads LLFAAFMMLLAWPFAFVATVG. Over 74–517 the chain is Lumenal; it reads RSENAVEPLS…SPRNHSKKQD (444 aa). Residues 129-134 carry the HXXXXD motif motif; it reads HSSYFD. A glycan (N-linked (GlcNAc...) asparagine) is linked at N207. Residues 443–478 enclose the EF-hand domain; it reads VGDLAVSELFRAIDSQDKGKITFDELCSFMEKCPDL. N511 carries N-linked (GlcNAc...) asparagine glycosylation. A Di-lysine motif motif is present at residues 514 to 517; that stretch reads KKQD.

The protein belongs to the 1-acyl-sn-glycerol-3-phosphate acyltransferase family.

The protein resides in the endoplasmic reticulum membrane. The protein localises to the golgi apparatus membrane. It is found in the cell membrane. It localises to the lipid droplet. It catalyses the reaction a 1-acyl-sn-glycero-3-phosphocholine + an acyl-CoA = a 1,2-diacyl-sn-glycero-3-phosphocholine + CoA. The enzyme catalyses a 1-O-alkyl-sn-glycero-3-phosphocholine + acetyl-CoA = a 1-O-alkyl-2-acetyl-sn-glycero-3-phosphocholine + CoA. It carries out the reaction a 1-acyl-sn-glycero-3-phosphate + an acyl-CoA = a 1,2-diacyl-sn-glycero-3-phosphate + CoA. The catalysed reaction is a 1-O-(1Z-alkenyl)-sn-glycero-3-phosphocholine + an acyl-CoA = a 1-O-(1Z-alkenyl)-2-acyl-sn-glycero-3-phosphocholine + CoA. It catalyses the reaction 1-acyl-sn-glycero-3-phospho-(1'-sn-glycerol) + an acyl-CoA = a 1,2-diacyl-sn-glycero-3-phospho-(1'-sn-glycerol) + CoA. The enzyme catalyses 1-hexadecanoyl-sn-glycero-3-phosphocholine + hexadecanoyl-CoA = 1,2-dihexadecanoyl-sn-glycero-3-phosphocholine + CoA. It carries out the reaction 1-O-hexadecyl-sn-glycero-3-phosphocholine + hexadecanoyl-CoA = 1-O-hexadecyl-2-hexadecanoyl-sn-glycero-3-phosphocholine + CoA. The catalysed reaction is a 1-O-(1Z-alkenyl)-sn-glycero-3-phosphocholine + hexadecanoyl-CoA = 1-O-(1Z)-alkenyl-2-hexadecanoyl-sn-glycero-3-phosphocholine + CoA. It catalyses the reaction 1-hexadecanoyl-sn-glycero-3-phospho-(1'-sn-glycerol) + hexadecanoyl-CoA = 1,2-dihexadecanoyl-sn-glycero-3-phospho-(1'-sn-glycerol) + CoA. The enzyme catalyses 1-dodecanoyl-sn-glycero-3-phosphocholine + hexadecanoyl-CoA = 1-dodecanoyl-2-hexadecanoyl-sn-glycero-3-phosphocholine + CoA. It carries out the reaction 1-tetradecanoyl-sn-glycero-3-phosphocholine + hexadecanoyl-CoA = 1-tetradecanoyl-2-hexadecanoyl-sn-glycero-3-phosphocholine + CoA. The catalysed reaction is 1-O-octadecyl-sn-glycero-3-phosphocholine + hexadecanoyl-CoA = 1-O-octadecyl-2-hexadecanoyl-sn-glycero-3-phosphocholine + CoA. It catalyses the reaction 1-octadecanoyl-sn-glycero-3-phosphocholine + hexadecanoyl-CoA = 1-octadecanoyl-2-hexadecanoyl-sn-glycero-3-phosphocholine + CoA. The enzyme catalyses 1-(9Z-octadecenoyl)-sn-glycero-3-phosphocholine + hexadecanoyl-CoA = 1-(9Z-octadecenoyl)-2-hexadecanoyl-sn-glycero-3-phosphocholine + CoA. It carries out the reaction 1-eicosanoyl-sn-glycero-3-phosphocholine + hexadecanoyl-CoA = 1-eicosanoyl-2-hexadecanoyl-sn-glycero-3-phosphocholine + CoA. The catalysed reaction is hexanoyl-CoA + 1-hexadecanoyl-sn-glycero-3-phosphocholine = 1-hexadecanoyl-2-hexanoyl-sn-glycero-3-phosphocholine + CoA. It catalyses the reaction octanoyl-CoA + 1-hexadecanoyl-sn-glycero-3-phosphocholine = 1-hexadecanoyl-2-octanoyl-sn-glycero-3-phosphocholine + CoA. The enzyme catalyses decanoyl-CoA + 1-hexadecanoyl-sn-glycero-3-phosphocholine = 1-hexadecanoyl-2-decanoyl-sn-glycero-3-phosphocholine + CoA. It carries out the reaction dodecanoyl-CoA + 1-hexadecanoyl-sn-glycero-3-phosphocholine = 1-hexadecanoyl-2-dodecanoyl-sn-glycero-3-phosphocholine + CoA. The catalysed reaction is tetradecanoyl-CoA + 1-hexadecanoyl-sn-glycero-3-phosphocholine = 1-hexadecanoyl-2-tetradecanoyl-sn-glycero-3-phosphocholine + CoA. It catalyses the reaction 1-hexadecanoyl-sn-glycero-3-phosphocholine + (9Z)-octadecenoyl-CoA = 1-hexadecanoyl-2-(9Z-octadecenoyl)-sn-glycero-3-phosphocholine + CoA. The enzyme catalyses (9Z,12Z)-octadecadienoyl-CoA + 1-hexadecanoyl-sn-glycero-3-phosphocholine = 1-hexadecanoyl-2-(9Z,12Z-octadecadienoyl)-sn-glycero-3-phosphocholine + CoA. It carries out the reaction (4Z,7Z,10Z,13Z,16Z,19Z)-docosahexaenoyl-CoA + 1-hexadecanoyl-sn-glycero-3-phosphocholine = 1-hexadecanoyl-2-(4Z,7Z,10Z,13Z,16Z,19Z-docosahexaenoyl)-sn-glycero-3-phosphocholine + CoA. The catalysed reaction is 1-hexadecanoyl-sn-glycero-3-phosphocholine + acetyl-CoA = 1-hexadecanoyl-2-acetyl-sn-glycero-3-phosphocholine + CoA. It catalyses the reaction eicosanoyl-CoA + 1-hexadecanoyl-sn-glycero-3-phosphocholine = 1-hexadecanoyl-2-eicosanoyl-sn-glycero-3-phosphocholine + CoA. The enzyme catalyses 1-O-hexadecyl-sn-glycero-3-phosphocholine + acetyl-CoA = 1-O-hexadecyl-2-acetyl-sn-glycero-3-phosphocholine + CoA. It carries out the reaction a 1-acyl-sn-glycero-3-phosphocholine + hexadecanoyl-CoA = 1-acyl-2-hexadecanoyl-sn-glycero-3-phosphocholine + CoA. The catalysed reaction is a 1-acyl-sn-glycero-3-phosphate + hexadecanoyl-CoA = 1-acyl-2-hexadecanoyl-sn-glycero-3-phosphate + CoA. It catalyses the reaction 1-acyl-sn-glycero-3-phospho-(1'-sn-glycerol) + hexadecanoyl-CoA = 1-acyl-2-hexadecanoyl-sn-glycero-3-phospho-(1'-sn-glycerol) + CoA. It participates in lipid metabolism; phospholipid metabolism. Its function is as follows. Exhibits both acyltransferase and acetyltransferase activities. Activity is calcium-independent. Catalyzes the conversion of lysophosphatidylcholine (1-acyl-sn-glycero-3-phosphocholine or LPC) into phosphatidylcholine (1,2-diacyl-sn-glycero-3-phosphocholine or PC). Catalyzes the conversion 1-acyl-sn-glycerol-3-phosphate (lysophosphatidic acid or LPA) into 1,2-diacyl-sn-glycerol-3-phosphate (phosphatidic acid or PA) by incorporating an acyl moiety at the sn-2 position of the glycerol backbone. This Danio rerio (Zebrafish) protein is Lysophosphatidylcholine acyltransferase 1 (lpcat1).